Consider the following 183-residue polypeptide: ATP synthase subunit b, chloroplastic (183 aa).

A helical membrane pass occupies residues 25 to 45 (DILATNLINLTVVVGVLIFFG).

It belongs to the ATPase B chain family. As to quaternary structure, F-type ATPases have 2 components, F(1) - the catalytic core - and F(0) - the membrane proton channel. F(1) has five subunits: alpha(3), beta(3), gamma(1), delta(1), epsilon(1). F(0) has four main subunits: a(1), b(1), b'(1) and c(10-14). The alpha and beta chains form an alternating ring which encloses part of the gamma chain. F(1) is attached to F(0) by a central stalk formed by the gamma and epsilon chains, while a peripheral stalk is formed by the delta, b and b' chains.

The protein localises to the plastid. It localises to the chloroplast thylakoid membrane. Its function is as follows. F(1)F(0) ATP synthase produces ATP from ADP in the presence of a proton or sodium gradient. F-type ATPases consist of two structural domains, F(1) containing the extramembraneous catalytic core and F(0) containing the membrane proton channel, linked together by a central stalk and a peripheral stalk. During catalysis, ATP synthesis in the catalytic domain of F(1) is coupled via a rotary mechanism of the central stalk subunits to proton translocation. In terms of biological role, component of the F(0) channel, it forms part of the peripheral stalk, linking F(1) to F(0). This Saccharum hybrid (Sugarcane) protein is ATP synthase subunit b, chloroplastic.